Reading from the N-terminus, the 407-residue chain is MAKSKFERNKPHVNVGTIGHVDHGKTTLTAALTRVCAEVFGGTAVAFDGIDNAPEERERGITISTSHVEYDSPTRHYAHVDCPGHADYVKNMITGAAQMDGAILVCGATDGPMPQTREHILLSRQVGVPYIVVFLNKSDLLADDCGGADSEEYAEMLELVEMELRDLLSEYDFPGDDTPIIPGSALMALKGEDDNEMGTTAVRKLVETLDTYIPDPERAIDGAFLMPIEDVFSIQGRGTVVTGRVERGIIKIQEEVEIVGIVDTTKTTCTGVEMFRKLLDEGRAGENCGILLRGTKREDVQRGQVLAKPGSITPHTQFEAEVYVLGKDEGGRHTPFFKGYRPQFYFRTTDVTGACSLPEGVEMVMPGDNIQMTVELIHPIAMDEGLRFAIREGGRTVGAGVVAKILK.

Residues 10–217 (KPHVNVGTIG…TLDTYIPDPE (208 aa)) enclose the tr-type G domain. A G1 region spans residues 19-26 (GHVDHGKT). Position 19–26 (19–26 (GHVDHGKT)) interacts with GTP. Threonine 26 lines the Mg(2+) pocket. Positions 60 to 64 (GITIS) are G2. A G3 region spans residues 81–84 (DCPG). GTP contacts are provided by residues 81–85 (DCPGH) and 136–139 (NKSD). Residues 136-139 (NKSD) form a G4 region. The interval 184-186 (SAL) is G5.

The protein belongs to the TRAFAC class translation factor GTPase superfamily. Classic translation factor GTPase family. EF-Tu/EF-1A subfamily. Monomer.

The protein localises to the cytoplasm. The enzyme catalyses GTP + H2O = GDP + phosphate + H(+). Its function is as follows. GTP hydrolase that promotes the GTP-dependent binding of aminoacyl-tRNA to the A-site of ribosomes during protein biosynthesis. The protein is Elongation factor Tu of Marinomonas sp. (strain MWYL1).